The sequence spans 510 residues: 1,3-beta-glucanosyltransferase gas5 (510 aa).

The first 22 residues, 1–22 (MNFLHFLTTSLLLLGGSRLALA), serve as a signal peptide directing secretion. C70 and C99 form a disulfide bridge. Y88 contributes to the (1,3-beta-D-glucosyl)n binding site. An N-linked (GlcNAc...) asparagine glycan is attached at N147. Residues N158, E159, D200, and R205 each contribute to the (1,3-beta-D-glucosyl)n site. E159 acts as the Proton donor in catalysis. Cystine bridges form between C214/C353 and C232/C264. Residues N216 and N252 are each glycosylated (N-linked (GlcNAc...) asparagine). The active-site Nucleophile is E261. Y300 provides a ligand contact to (1,3-beta-D-glucosyl)n. N-linked (GlcNAc...) asparagine glycosylation is found at N318, N337, and N397. The segment at 424-456 (QSSTSGSSSGSSSASTTASSSSVSSGSSISSGS) is disordered. Residue S485 is the site of GPI-anchor amidated serine attachment. The propeptide at 486 to 510 (SASTFNLSRFYVFAGILAISGLVFA) is removed in mature form. N491 carries an N-linked (GlcNAc...) asparagine glycan.

It belongs to the glycosyl hydrolase 72 family. Post-translationally, the GPI-anchor is attached to the protein in the endoplasmic reticulum and serves to target the protein to the cell surface. There, the glucosamine-inositol phospholipid moiety is cleaved off and the GPI-modified mannoprotein is covalently attached via its lipidless GPI glycan remnant to the 1,6-beta-glucan of the outer cell wall layer.

The protein resides in the secreted. The protein localises to the cell wall. Its subcellular location is the membrane. Functionally, splits internally a 1,3-beta-glucan molecule and transfers the newly generated reducing end (the donor) to the non-reducing end of another 1,3-beta-glucan molecule (the acceptor) forming a 1,3-beta linkage, resulting in the elongation of 1,3-beta-glucan chains in the cell wall. The chain is 1,3-beta-glucanosyltransferase gas5 (gas5) from Schizosaccharomyces pombe (strain 972 / ATCC 24843) (Fission yeast).